The sequence spans 77 residues: Small ribosomal subunit protein uS17 (77 aa).

It belongs to the universal ribosomal protein uS17 family. As to quaternary structure, part of the 30S ribosomal subunit.

In terms of biological role, one of the primary rRNA binding proteins, it binds specifically to the 5'-end of 16S ribosomal RNA. This chain is Small ribosomal subunit protein uS17, found in Rickettsia akari (strain Hartford).